An 86-amino-acid chain; its full sequence is Neurotoxin 3FTx-8a (86 aa).

Residues 1–21 (MKTLLLTLVVVTIVCLDLGYT) form the signal peptide. Intrachain disulfides connect Cys24-Cys45, Cys27-Cys32, Cys38-Cys63, Cys67-Cys78, and Cys79-Cys84.

As to expression, expressed by the venom gland.

It is found in the secreted. Binds with low affinity to muscular (alpha-1-beta-1-delta-epsilon/CHRNA1-CHRNB1-CHRND-CHRNE) and very low affinity to neuronal (alpha-7/CHRNA7) nicotinic acetylcholine receptor (nAChR). The protein is Neurotoxin 3FTx-8a of Bungarus fasciatus (Banded krait).